A 244-amino-acid polypeptide reads, in one-letter code: Putative B3 domain-containing protein At2g31460 (244 aa).

A DNA-binding region (TF-B3) is located at residues 49 to 147 (SSMHMENSGF…PVHDGVNLSG (99 aa)). Disordered regions lie at residues 175-196 (DGNLPQDSGHDGHNDNLPQDSV) and 217-244 (DSQGYLPDEDEDFGFNDDGSIRDSGHYQ). The span at 235–244 (GSIRDSGHYQ) shows a compositional bias: basic and acidic residues.

Its subcellular location is the nucleus. This Arabidopsis thaliana (Mouse-ear cress) protein is Putative B3 domain-containing protein At2g31460.